A 260-amino-acid chain; its full sequence is MTALSRFPRFFVTSPSPCPYLPGRQERKIFTELSGQQAGELNDALSRIGFRRSQSVAYRPSCAGCTACVSVRVVTEGFQPNATQRKLLKRYGDLEVTACKPWATGEQYELLKRYLDSRHPGGGMAAMDESDYADMVEQSPVSSYVIEYREPSVNGERGRLVGACITDQQGDGLSMIYSYFVTDDEARPGMGNFIIMDHILRARAAGLPYVYLGYWVKGSARMAYKTRYRPIEVLGPTGWALLEDEDMVGAMPSAVAAALA.

Belongs to the R-transferase family. Bpt subfamily.

It is found in the cytoplasm. The enzyme catalyses N-terminal L-glutamyl-[protein] + L-leucyl-tRNA(Leu) = N-terminal L-leucyl-L-glutamyl-[protein] + tRNA(Leu) + H(+). It catalyses the reaction N-terminal L-aspartyl-[protein] + L-leucyl-tRNA(Leu) = N-terminal L-leucyl-L-aspartyl-[protein] + tRNA(Leu) + H(+). Functions in the N-end rule pathway of protein degradation where it conjugates Leu from its aminoacyl-tRNA to the N-termini of proteins containing an N-terminal aspartate or glutamate. This is Aspartate/glutamate leucyltransferase from Sphingomonas elodea.